The sequence spans 409 residues: Rho-GTPase-activating protein BAG7 (409 aa).

Polar residues predominate over residues 1–26 (MFNMNLLSTPSSEEGSPQNRSSSMSS). The interval 1-32 (MFNMNLLSTPSSEEGSPQNRSSSMSSVEGKKD) is disordered. Positions 50–257 (VSLEESLKVA…FLILHASDII (208 aa)) constitute a Rho-GAP domain. The interval 362 to 409 (KLLGNVGNSSNTGIKDPTERVPRGEHKTKHKQRQSWLRRLTSPSRTQP) is disordered. Basic and acidic residues predominate over residues 377-386 (DPTERVPRGE).

As to quaternary structure, interacts with RHO1.

Its function is as follows. Acts in signal transduction. Activates RHO1. In Saccharomyces cerevisiae (strain ATCC 204508 / S288c) (Baker's yeast), this protein is Rho-GTPase-activating protein BAG7 (BAG7).